The primary structure comprises 302 residues: Chloramphenicol resistance protein (302 aa).

It localises to the cell membrane. Its function is as follows. This protein is thought to be a membrane-associated barrier of drug uptake. The sequence is that of Chloramphenicol resistance protein (cml) from Escherichia coli.